The following is a 570-amino-acid chain: Sulfite reductase [NADPH] hemoprotein beta-component (570 aa).

The [4Fe-4S] cluster site is built by cysteine 434, cysteine 440, cysteine 479, and cysteine 483. Cysteine 483 serves as a coordination point for siroheme.

This sequence belongs to the nitrite and sulfite reductase 4Fe-4S domain family. As to quaternary structure, alpha(8)-beta(8). The alpha component is a flavoprotein, the beta component is a hemoprotein. The cofactor is siroheme. [4Fe-4S] cluster serves as cofactor.

The catalysed reaction is hydrogen sulfide + 3 NADP(+) + 3 H2O = sulfite + 3 NADPH + 4 H(+). It functions in the pathway sulfur metabolism; hydrogen sulfide biosynthesis; hydrogen sulfide from sulfite (NADPH route): step 1/1. Functionally, component of the sulfite reductase complex that catalyzes the 6-electron reduction of sulfite to sulfide. This is one of several activities required for the biosynthesis of L-cysteine from sulfate. This Escherichia coli (strain ATCC 8739 / DSM 1576 / NBRC 3972 / NCIMB 8545 / WDCM 00012 / Crooks) protein is Sulfite reductase [NADPH] hemoprotein beta-component.